The sequence spans 231 residues: Large ribosomal subunit protein uL1 (231 aa).

This sequence belongs to the universal ribosomal protein uL1 family. In terms of assembly, part of the 50S ribosomal subunit.

Binds directly to 23S rRNA. The L1 stalk is quite mobile in the ribosome, and is involved in E site tRNA release. Functionally, protein L1 is also a translational repressor protein, it controls the translation of the L11 operon by binding to its mRNA. The protein is Large ribosomal subunit protein uL1 of Cupriavidus pinatubonensis (strain JMP 134 / LMG 1197) (Cupriavidus necator (strain JMP 134)).